The following is a 288-amino-acid chain: Extracellular ribonuclease (288 aa).

A signal peptide spans Met1 to Ala26.

The protein resides in the secreted. Functionally, mg(2+)-activated ribonuclease which hydrolyzes RNA apparently nonspecifically into oligonucleotides with 5'-terminal phosphate. This chain is Extracellular ribonuclease (bsn), found in Bacillus subtilis (strain 168).